A 218-amino-acid polypeptide reads, in one-letter code: Oxidative stress regulator AosR (218 aa).

The CXXXC motif lies at Cys-5–Cys-9. Cysteines 5 and 9 form a disulfide.

This sequence belongs to the AosR family. As to quaternary structure, homodimer. Under oxidative stress, interacts with the extracytoplasmic-function (ECF) RNA polymerase sigma factor SigH.

Activity is modulated by the formation of a disulfide bound within the N-terminal Cys-X-X-X-Cys (CXXXC) motif. This intramolecular disulfide bond is formed in response to oxidative stress, and results in oxidative stress-dependent interaction with the sigma factor SigH. Transcription factor crucial for intra-mycobacterial redox homeostasis and protection against host-derived oxidative and nitrosative radicals. In response to oxidative stress, interacts with the ECF sigma factor SigH and, in conjunction with SigH, binds to an auxiliary promoter upstream of mec-cysO-cysM, leading to the transcriptional activation of these genes encoding a non-canonical actinomycete-specific cysteine biosynthesis pathway. Increased transcription of mec-cysO-cysM results in enhanced production of L-cysteine and cysteine-derived antioxidant molecules. Increased production of cysteine protects mycobacteria cells from host phagocyte-derived oxidative and nitrosative stress, thus facilitating the mycobacterial growth in the host. The protein is Oxidative stress regulator AosR of Mycobacterium bovis (strain ATCC BAA-935 / AF2122/97).